The primary structure comprises 430 residues: UDP-N-acetylglucosamine 1-carboxyvinyltransferase 1 (430 aa).

22-23 (KN) lines the phosphoenolpyruvate pocket. Arginine 102 serves as a coordination point for UDP-N-acetyl-alpha-D-glucosamine. The active-site Proton donor is cysteine 126. Cysteine 126 is modified (2-(S-cysteinyl)pyruvic acid O-phosphothioketal). UDP-N-acetyl-alpha-D-glucosamine is bound by residues 131-135 (RPVDL), 172-175 (KVSV), aspartate 317, and isoleucine 339.

This sequence belongs to the EPSP synthase family. MurA subfamily.

The protein localises to the cytoplasm. The catalysed reaction is phosphoenolpyruvate + UDP-N-acetyl-alpha-D-glucosamine = UDP-N-acetyl-3-O-(1-carboxyvinyl)-alpha-D-glucosamine + phosphate. It participates in cell wall biogenesis; peptidoglycan biosynthesis. Functionally, cell wall formation. Adds enolpyruvyl to UDP-N-acetylglucosamine. This is UDP-N-acetylglucosamine 1-carboxyvinyltransferase 1 from Mesorhizobium japonicum (strain LMG 29417 / CECT 9101 / MAFF 303099) (Mesorhizobium loti (strain MAFF 303099)).